We begin with the raw amino-acid sequence, 438 residues long: MAFSPFGHPYGSTSQFLVSASSSATCCETAPRPVSDVASASTSASTLCCTPYDSRLLGSARPELGAALGIYGAPYAAAQSYPGYLTYGPEPPTLCGALNPQYEFKDAAGSFAPSLTQPGAYYPYETTLGQYQYDRYGGVELSSAGRRKNATRESTSALKAWLHEHRKNPYPTKGEKIMLAIITKMTLTQVSTWFANARRRLKKENKMTWAPKNKGGEERKADSGEDSLGCLNGDTKDATASQEARGLRLSDLEDLEEEEEEEEAEEEAAVSAARRLADFQKSTQPLPAPCAAAQERCLESRECGLGLPRFSFTEAPQSGEADFITAEPGGPTMILHYPSGHKPRIWSLAHTAAASAVESAPSTPPRAQSPECHMIPRQPSSIRRLLVPRDSEGEEDSPAAKAFGNSTFTLQGLPLNCAPYPRRREPEVRFQYPSGAEG.

Positions 143 to 205 form a DNA-binding region, homeobox; sequence SAGRRKNATR…NARRRLKKEN (63 aa). Disordered stretches follow at residues 205–270 and 388–438; these read NKMT…EAAV and PRDS…GAEG. A compositionally biased stretch (basic and acidic residues) spans 214–223; sequence KGGEERKADS. Residues 252 to 268 show a composition bias toward acidic residues; the sequence is LEDLEEEEEEEEAEEEA.

The protein belongs to the TALE/IRO homeobox family. Expressed in a subset of retinal ganglion cells and bipolar cells; including in type 2 and type 3a bipolar cells.

The protein resides in the nucleus. Its function is as follows. Transcription factor. Binds to the iroquois binding site (IBS) motif of target genes to regulate gene expression; functions as a transcriptional activator or repressor. Modulates expression of RCVRN, VSX1, BHLHE22/BHLHB5 and TACR3/Nk3r. Required downstream of retinal bipolar cell specification for the terminal differentiation of type 2, type 3a and possibly type 6 bipolar cells. The chain is Iroquois-class homeodomain protein IRX-6 (Irx6) from Mus musculus (Mouse).